Consider the following 337-residue polypeptide: tRNA-dihydrouridine synthase B (337 aa).

Residues 19 to 21 (PMA) and Gln-73 each bind FMN. Cys-103 (proton donor) is an active-site residue. FMN-binding positions include Lys-142, 203–205 (NGD), and 227–228 (GR).

This sequence belongs to the Dus family. DusB subfamily. The cofactor is FMN.

It carries out the reaction a 5,6-dihydrouridine in tRNA + NAD(+) = a uridine in tRNA + NADH + H(+). The enzyme catalyses a 5,6-dihydrouridine in tRNA + NADP(+) = a uridine in tRNA + NADPH + H(+). Functionally, catalyzes the synthesis of 5,6-dihydrouridine (D), a modified base found in the D-loop of most tRNAs, via the reduction of the C5-C6 double bond in target uridines. This chain is tRNA-dihydrouridine synthase B, found in Pseudomonas putida (strain ATCC 47054 / DSM 6125 / CFBP 8728 / NCIMB 11950 / KT2440).